A 772-amino-acid polypeptide reads, in one-letter code: Rho guanine nucleotide exchange factor 6 (772 aa).

Residues 1–111 (MNPEERVVTW…TLLAVNKATE (111 aa)) enclose the Calponin-homology (CH) domain. The segment at 115 to 158 (SERPCGRSSSLSATTSSQTNPQAAVPSTTPEQQSEEKAAEMTEN) is disordered. Low complexity predominate over residues 122 to 133 (SSSLSATTSSQT). Residue serine 126 is modified to Phosphoserine. Threonine 133 carries the phosphothreonine modification. A compositionally biased stretch (polar residues) spans 134–146 (NPQAAVPSTTPEQ). The region spanning 160–219 (SHQLIVKARFNFKQTNEDELSVCKGDIIYVTRVEEGGWWEGTLNGRTGWFPSNYVREIKP) is the SH3 domain. Serine 225 is subject to Phosphoserine. The DH domain maps to 241 to 421 (YYTVVLQNIL…KSLMGQCQDL (181 aa)). The PH domain maps to 443-548 (DIKTLGNVIF…WMEQLNRLTK (106 aa)). Serine 488 carries the phosphoserine modification. Residues 557–573 (SKTSSSSCSTHSSFSST) show a composition bias toward low complexity. The interval 557-581 (SKTSSSSCSTHSSFSSTGQPRGPLE) is disordered. Serine 640 and serine 680 each carry phosphoserine.

Interacts with PAK kinases through the SH3 domain. Interacts with GIT1. Interacts with PARVB. Component of cytoplasmic complexes, which also contain PXN, GIT1 and PAK1. Interacts with BIN2. Identified in a complex with BIN2 and GIT2. Interacts with PARVG; the guanine nucleotide exchange factor activity of ARHGEF6 is essential for PARVG-induced enhancement of cell spreading.

Its subcellular location is the cell projection. The protein resides in the lamellipodium. Its function is as follows. Acts as a RAC1 guanine nucleotide exchange factor (GEF). The chain is Rho guanine nucleotide exchange factor 6 (Arhgef6) from Rattus norvegicus (Rat).